The sequence spans 162 residues: Inorganic pyrophosphatase (162 aa).

Residue glutamate 8 coordinates Mg(2+). Substrate is bound by residues lysine 16, arginine 30, and tyrosine 42. Positions 52, 57, 84, and 89 each coordinate Mg(2+). Aspartate 89 serves as the catalytic Proton acceptor. Tyrosine 126 contacts substrate.

Belongs to the PPase family. In terms of assembly, homohexamer. Requires Mg(2+) as cofactor.

Its subcellular location is the cytoplasm. It carries out the reaction diphosphate + H2O = 2 phosphate + H(+). Its function is as follows. Catalyzes the hydrolysis of inorganic pyrophosphate (PPi) forming two phosphate ions. This chain is Inorganic pyrophosphatase, found in Mycobacterium bovis (strain ATCC BAA-935 / AF2122/97).